A 236-amino-acid chain; its full sequence is Movement and silencing protein TGBp1 (236 aa).

The (+)RNA virus helicase ATP-binding domain occupies 1-117 (MDHIHHLLSS…DNLFEPHYTL (117 aa)). Residues 118-236 (EITYRFGPNT…LGPDAFDSSP (119 aa)) form the (+)RNA virus helicase C-terminal domain.

Belongs to the Tymovirales TGBp1 protein family. As to quaternary structure, homodimer and homooligomer. Interacts with capsid protein. Interacts with host AGO1; this interaction targets the host protein for degradation, thereby suppressing the antiviral RNA silencing.

The protein resides in the host cytoplasm. Functionally, transports viral genome to neighboring plant cells directly through plasmosdesmata, without any budding. The movement protein allows efficient cell to cell propagation, by bypassing the host cell wall barrier. Increases plasmodesma size exclusion limit. Acts as a suppressor of RNA-mediated gene silencing, also known as post-transcriptional gene silencing (PTGS), a mechanism of plant viral defense that limits the accumulation of viral RNAs. This White clover mosaic virus (strain O) (WCMV) protein is Movement and silencing protein TGBp1.